A 1299-amino-acid chain; its full sequence is MAP3K epsilon protein kinase 1 (1299 aa).

One can recognise a Protein kinase domain in the interval 20–274 (YMLGDEIGKG…AKTLLSHPWI (255 aa)). HEAT repeat units follow at residues 25–62 (EIGKGAYGRVYIGLDLENGDFVAIKQVSLENIVQEDLN) and 86–125 (LKTKTHLHIILEYVENGSLANIIKPNKFGPFPESLVTVYI). ATP is bound by residues 26–34 (IGKGAYGRV) and lysine 49. Residue aspartate 144 is the Proton acceptor of the active site. The HEAT 3 repeat unit spans residues 218–256 (PYYDLQPMPALFRIVQDDSPPIPDSLSPDITDFLRQCFK). Disordered regions lie at residues 291–458 (IRYM…GNEL) and 483–509 (GKLNEASASTPASNANQGDSPVADGGK). Low complexity predominate over residues 374–385 (SSLQSSTCSISS). Polar residues-rich tracts occupy residues 415–432 (ATKQVGKESSIQMQQRSH) and 488–501 (ASASTPASNANQGD). 16 HEAT repeats span residues 532 to 570 (SNDGGDLFRLMMGVLKDDVIDIDGLVFDEKASPDNLLPL), 611 to 649 (VFVTQHGFLPVMDLLDSPKSRVTCAVLQLINEIIKDNID), 653 to 694 (NACL…SSSL), 698 to 736 (MFIACRGIPVLVGFLEADYAKYRSMVHLAIDGMWQVFKL), 743 to 780 (NDFCRIAAKNGILLRLINTLYSLNEATLLASEGRSGQL), 781 to 820 (DQHEALLSVIDHPDVLKTRPGGGEEPSNSQRSDLYQPDGD), 868 to 900 (QPEQVRPLLSLLEKEPPSRHVSGQLDYVKHIAG), 901 to 939 (LEKHESILPLLRASIDTMPRYFSKTMSKKVMAIEGAASA), 955 to 994 (SDTSSGLLSHMVTTLSAEVASQYLEKVADLLLEFARADTT), 998 to 1036 (YMCSQSLLSRLFHMFNRVEPPILLKILKCTNHLSTDPNC), 1043 to 1081 (ADAIKHLIPNLEVKEGNLVDQIHHEVLSALFNLCKINKR), 1085 to 1122 (QAAENGIIPHLMLFVMSDSPLKQYALPLLCDMAHASRN), 1125 to 1164 (EQLRSHGGLDVYLSLLDDEYWSVIALDSIAVCLAQDNDNR), 1186 to 1210 (CPERHFVHILEPFLKIITKSSRINT), 1211 to 1249 (TLAVNGLTPLLIARLDHQDAIARLNLLKLIKAVYEHHPR), and 1279 to 1299 (QVLVKQMATSLLKALHINTVL). Residues 795 to 852 (VLKTRPGGGEEPSNSQRSDLYQPDGDRPRSSSAALDATEDVKQHHRISISSNRTSTDK) are disordered.

This sequence belongs to the protein kinase superfamily. Ser/Thr protein kinase family. Post-translationally, autophosphorylated. In terms of tissue distribution, expressed in both the sporophytic and the gametophytic tissues, especially in dividing cells.

The protein localises to the cytoplasm. Its subcellular location is the cytoskeleton. The protein resides in the microtubule organizing center. It is found in the nucleus. It localises to the nucleolus. The protein localises to the cell membrane. It catalyses the reaction L-seryl-[protein] + ATP = O-phospho-L-seryl-[protein] + ADP + H(+). The enzyme catalyses L-threonyl-[protein] + ATP = O-phospho-L-threonyl-[protein] + ADP + H(+). Serine/threonine-protein kinase involved in the spatial and temporal control system organizing cortical activities in mitotic and postmitotic cells. Required for the normal functioning of the plasma membrane in developing pollen. Involved in the regulation of cell expansion and embryo development. In Brassica napus (Rape), this protein is MAP3K epsilon protein kinase 1.